The sequence spans 247 residues: Small ribosomal subunit protein uS2 (247 aa).

It belongs to the universal ribosomal protein uS2 family.

In Halorhodospira halophila (strain DSM 244 / SL1) (Ectothiorhodospira halophila (strain DSM 244 / SL1)), this protein is Small ribosomal subunit protein uS2.